The chain runs to 495 residues: Beta-galactoside alpha-2,6-sialyltransferase 2 (495 aa).

At Met-1–Gln-10 the chain is on the cytoplasmic side. Residues Gly-11–Thr-31 form a helical; Signal-anchor for type II membrane protein membrane-spanning segment. Over Asp-32–Ala-495 the chain is Lumenal. Disordered stretches follow at residues Gly-63–Trp-90 and Gly-107–Glu-165. Positions Pro-134–Ala-143 are enriched in low complexity. Residues Pro-144–Arg-153 are compositionally biased toward basic residues. 3 disulfide bridges follow: Cys-225–Cys-491, Cys-268–Cys-420, and Cys-438–Cys-449. N-linked (GlcNAc...) asparagine glycans are attached at residues Asn-279 and Asn-309.

Belongs to the glycosyltransferase 29 family.

The protein localises to the golgi apparatus. Its subcellular location is the golgi stack membrane. The enzyme catalyses a beta-D-galactoside + CMP-N-acetyl-beta-neuraminate = an N-acetyl-alpha-neuraminyl-(2-&gt;6)-beta-D-galactosyl derivative + CMP + H(+). Its function is as follows. Transfers sialic acid from the donor of substrate CMP-sialic acid to galactose containing acceptor substrates. Has alpha-2,6-sialyltransferase activity toward oligosaccharides that have the Gal-beta-1,4-GlcNAc sequence at the non-reducing end of their carbohydrate groups, but it has weak or no activities toward glycoproteins and glycolipids. This chain is Beta-galactoside alpha-2,6-sialyltransferase 2 (ST6GAL2), found in Bos taurus (Bovine).